The sequence spans 396 residues: L-lactate dehydrogenase (396 aa).

The 380-residue stretch at M1–D380 folds into the FMN hydroxy acid dehydrogenase domain. Residue Y24 participates in substrate binding. The FMN site is built by S106 and Q127. Residue Y129 coordinates substrate. T155 lines the FMN pocket. Residue R164 participates in substrate binding. K251 contributes to the FMN binding site. H275 functions as the Proton acceptor in the catalytic mechanism. R278 lines the substrate pocket. An FMN-binding site is contributed by D306 to R330.

It belongs to the FMN-dependent alpha-hydroxy acid dehydrogenase family. Requires FMN as cofactor.

It localises to the cell inner membrane. The enzyme catalyses (S)-lactate + A = pyruvate + AH2. Catalyzes the conversion of L-lactate to pyruvate. Is coupled to the respiratory chain. The protein is L-lactate dehydrogenase of Escherichia fergusonii (strain ATCC 35469 / DSM 13698 / CCUG 18766 / IAM 14443 / JCM 21226 / LMG 7866 / NBRC 102419 / NCTC 12128 / CDC 0568-73).